Here is a 503-residue protein sequence, read N- to C-terminus: D-xylose-proton symporter-like 2 (503 aa).

The segment covering 1-15 (MALDPEQQQPISSVS) has biased composition (polar residues). The interval 1–32 (MALDPEQQQPISSVSREFGKSSGEISPEREPL) is disordered. The residue at position 2 (alanine 2) is an N-acetylalanine. Phosphoserine is present on serine 26. Transmembrane regions (helical) follow at residues 42-62 (YSVV…LLYG), 99-119 (GSLY…DVIG), 124-144 (LILA…APTY), 146-166 (VLII…HAAP), 187-207 (FFIV…VNVH), 213-233 (MYAT…WLPA), 305-325 (ALII…PSVL), 346-366 (VSIL…VVID), 375-395 (LGGV…YLFF), 400-420 (VVAV…FGPI), 437-457 (GLSL…FAFS), and 467-487 (ILFC…FFIV).

The protein belongs to the major facilitator superfamily. Sugar transporter (TC 2.A.1.1) family.

Its subcellular location is the membrane. In Arabidopsis thaliana (Mouse-ear cress), this protein is D-xylose-proton symporter-like 2.